Here is a 431-residue protein sequence, read N- to C-terminus: Glutamate--tRNA ligase 2 (431 aa).

The 'HIGH' region motif lies at 6-16 (PSPTGDMHIGN). The 'KMSKS' region motif lies at 235 to 239 (KMSKR). Lys-238 is a binding site for ATP.

The protein belongs to the class-I aminoacyl-tRNA synthetase family. Glutamate--tRNA ligase type 1 subfamily. As to quaternary structure, monomer.

It localises to the cytoplasm. The catalysed reaction is tRNA(Glu) + L-glutamate + ATP = L-glutamyl-tRNA(Glu) + AMP + diphosphate. Catalyzes the attachment of glutamate to tRNA(Glu) in a two-step reaction: glutamate is first activated by ATP to form Glu-AMP and then transferred to the acceptor end of tRNA(Glu). The chain is Glutamate--tRNA ligase 2 from Campylobacter jejuni subsp. doylei (strain ATCC BAA-1458 / RM4099 / 269.97).